The chain runs to 55 residues: Riparin-1.5 acid (55 aa).

An N-terminal signal peptide occupies residues 1–15; the sequence is MKIIVFLAVLMLVSA. Positions 16 to 41 are excised as a propeptide; it reads QVCLVSAAEMEHSSDNELSSRDLVKR. C47 and C53 are oxidised to a cystine. Positions 54–55 are excised as a propeptide; the sequence is NH.

Expressed by the skin glands.

It is found in the secreted. This Crinia riparia (Streambank froglet) protein is Riparin-1.5 acid.